Consider the following 316-residue polypeptide: Aspartate carbamoyltransferase catalytic subunit (316 aa).

Arg56 and Thr57 together coordinate carbamoyl phosphate. Residue Lys84 participates in L-aspartate binding. Carbamoyl phosphate is bound by residues Arg106, His139, and Gln142. L-aspartate is bound by residues Arg172 and Arg224. Residues Gly268 and Pro269 each contribute to the carbamoyl phosphate site.

This sequence belongs to the aspartate/ornithine carbamoyltransferase superfamily. ATCase family. Heterododecamer (2C3:3R2) of six catalytic PyrB chains organized as two trimers (C3), and six regulatory PyrI chains organized as three dimers (R2).

It catalyses the reaction carbamoyl phosphate + L-aspartate = N-carbamoyl-L-aspartate + phosphate + H(+). It functions in the pathway pyrimidine metabolism; UMP biosynthesis via de novo pathway; (S)-dihydroorotate from bicarbonate: step 2/3. Catalyzes the condensation of carbamoyl phosphate and aspartate to form carbamoyl aspartate and inorganic phosphate, the committed step in the de novo pyrimidine nucleotide biosynthesis pathway. This chain is Aspartate carbamoyltransferase catalytic subunit, found in Ligilactobacillus salivarius (strain UCC118) (Lactobacillus salivarius).